The following is a 303-amino-acid chain: Nucleotide-binding protein SAR0820 (303 aa).

18–25 serves as a coordination point for ATP; sequence GLSGAGKS. Residue 69 to 72 participates in GTP binding; the sequence is DLRG.

The protein belongs to the RapZ-like family.

Its function is as follows. Displays ATPase and GTPase activities. The chain is Nucleotide-binding protein SAR0820 from Staphylococcus aureus (strain MRSA252).